We begin with the raw amino-acid sequence, 400 residues long: Subtilisin-like protease 7 (400 aa).

Residues 1 to 20 form the signal peptide; sequence MGFITKAIPLALAAASVING. Residues 21-119 constitute a propeptide that is removed on maturation; the sequence is AEILETRAGV…IERDARVQIN (99 aa). The region spanning 36-118 is the Inhibitor I9 domain; the sequence is KYIVVMNDGI…YIERDARVQI (83 aa). The Peptidase S8 domain maps to 129-400; the sequence is SWGLARVGSK…SKLINNGSGM (272 aa). Active-site charge relay system residues include aspartate 161 and histidine 192. 2 N-linked (GlcNAc...) asparagine glycosylation sites follow: asparagine 222 and asparagine 252. Residue serine 346 is the Charge relay system of the active site. An N-linked (GlcNAc...) asparagine glycan is attached at asparagine 396.

Belongs to the peptidase S8 family.

The protein localises to the secreted. Functionally, secreted subtilisin-like serine protease with keratinolytic activity that contributes to pathogenicity. This is Subtilisin-like protease 7 (SUB7) from Trichophyton soudanense.